Here is a 515-residue protein sequence, read N- to C-terminus: MNDHDEETLASLQQANDQLMAKNHALVKALSRATQEMTKTKAQLNQLAGPPMTFATMVRVHSAKTDGQGVQHASAEVAAGARRMIVPIAANLQASRLEPGRTVLLNENMVVVSQLDTDTLGAVRSVRQVCDDGRLLVADGGGNVTLVRCSGTLAKQAISAGDRVNVDASLRFALSLVPPENDDDLVLEEVPDVTFADIGGLDEQIERIRDAVQMPFQHRELFERYDLKPPKGVLLYGPPGNGKTLIAKAVANALAEGTDAGSGVFLSVKGPELLNKFVGESERLIRMIFKRARERAADGKPVIVFIDEMDSLLRTRGTGVSSDVETTIVPQFLTELDGVESLDNVMVIGASNRIDMIDPAVLRPGRLDVKIRVDRPGIQQATQIVRHYLTDKLPLSPNVDAKALIGVLVNDIYAQDEHRHLCDICDDHGQWRPVYLADVVSGAVLKNIVDRAKTYAVKLSITTGQAAAIGINLLAKAVDEEYGETRDALLDADPEQWSRINGLEPGRVTGIRPVA.

Residues 2–49 (NDHDEETLASLQQANDQLMAKNHALVKALSRATQEMTKTKAQLNQLAG) adopt a coiled-coil conformation. Residue 240-245 (GNGKTL) participates in ATP binding.

The protein belongs to the AAA ATPase family. As to quaternary structure, homohexamer. Assembles into a hexameric ring structure.

The protein is AAA ATPase forming ring-shaped complexes of Bifidobacterium adolescentis (strain ATCC 15703 / DSM 20083 / NCTC 11814 / E194a).